We begin with the raw amino-acid sequence, 1982 residues long: Ras guanine nucleotide exchange factor V (1982 aa).

15 LRR repeats span residues 1 to 26 (MGNI…SLEG), 47 to 68 (LTQL…ITNL), 69 to 94 (SNLS…PFKP), 105 to 128 (NENL…VFVL), 130 to 151 (NLKQ…LCGG), 164 to 187 (ACQL…IGDQ), 188 to 210 (LTTL…SFSN), 212 to 234 (VSLT…LCTL), 236 to 257 (KLVH…HTLG), 261 to 284 (LPSL…ILEI), 286 to 307 (SLRV…IGNL), 308 to 330 (LNLN…IGEL), 331 to 352 (INLR…EFSK), 354 to 376 (SKLN…LHSL), and 378 to 399 (QLLR…LIKS). Residues 1–1831 (MGNINSICLN…IANAFYELRN (1831 aa)) are Extracellular-facing. Disordered regions lie at residues 414-436 (YGST…STHG), 457-532 (NQIN…NKKQ), and 615-654 (NNSG…RRGS). Composition is skewed to low complexity over residues 415–436 (GSTM…STHG) and 457–495 (NQIN…TPNG). One copy of the LRR 16 repeat lies at 443-466 (DILLSSVTLNNSILNQINNNNNNN). The segment covering 506–520 (LTISRSLFRGNSSNL) has biased composition (polar residues). Positions 515 to 567 (GNSSNLESEKEDFINKKQQQQQQQQQQQQQQQQQQQQQQQQQQQQQQQQQQLG) form a coiled coil. The stretch at 592–615 (EDDIQKMQLGLEALSNLETSIGSN) is one LRR 17 repeat. Gly residues predominate over residues 616–642 (NSGGGDSMNGSGGNINNSGGSGSGCGT). LRR repeat units follow at residues 657–684 (LPPT…VMSG) and 773–796 (HSNL…LSSS). 2 disordered regions span residues 756–778 (QSST…NLSQ) and 807–829 (LQFQ…SNQP). Residues 832–1236 (TIVPSFSKFK…QIKYSIDRYG (405 aa)) form the GBD/FH3 domain. 4 LRR repeats span residues 979–1003 (LLGI…GYCL), 1075–1100 (SPYV…VFKI), 1239–1263 (VPAI…RWVD), and 1689–1712 (VQNM…FVDL). Residues 1595–1717 (KDRRVSSVTL…LFVDLSTKSY (123 aa)) form the N-terminal Ras-GEF domain. Residues 1747–1974 (DEIEIARQLS…YEMSLSAEPR (228 aa)) enclose the Ras-GEF domain. Residues 1832-1848 (YHLLMAIISGLNASPVL) form a helical membrane-spanning segment. Residues 1849-1982 (RLKYTKGKLS…PRNAERYDIQ (134 aa)) are Cytoplasmic-facing. 2 LRR repeats span residues 1865-1888 (LDTL…LAAA) and 1917-1941 (RINF…LFPY).

It localises to the membrane. In terms of biological role, promotes the exchange of Ras-bound GDP by GTP. In Dictyostelium discoideum (Social amoeba), this protein is Ras guanine nucleotide exchange factor V (gefV).